The sequence spans 168 residues: Coiled-coil domain-containing protein 200 (168 aa).

The stretch at 16-50 (LDRRRWLMAQQQQELQQKEQELKNHQEEEQQSEEK) forms a coiled coil. A disordered region spans residues 23-168 (MAQQQQELQQ…LKSTNYIQQW (146 aa)). Positions 31 to 52 (QQKEQELKNHQEEEQQSEEKLQ) are enriched in basic and acidic residues. Over residues 70 to 82 (SQEQPQPSQQQPS) the composition is skewed to low complexity. Pro residues-rich tracts occupy residues 83-94 (VQPPSQPPPQPS) and 104-117 (GPQP…PQPT). Polar residues-rich tracts occupy residues 124-138 (RCTQ…QDSQ) and 145-168 (PCQS…IQQW).

This chain is Coiled-coil domain-containing protein 200, found in Homo sapiens (Human).